The sequence spans 512 residues: DNA-binding protein (512 aa).

The disordered stretch occupies residues 1-105 (MAGRGGSQLE…QDSEDEREAE (105 aa)). Residues 9-21 (LERRRERTPDRGR) are compositionally biased toward basic and acidic residues. Over residues 69–78 (QEQPPPPQQP) the composition is skewed to pro residues. Over residues 79 to 88 (PKKKPRKTKH) the composition is skewed to basic residues. The segment covering 96 to 105 (QDSEDEREAE) has biased composition (acidic residues). Phosphotyrosine; by host is present on Tyr-174. Residues Cys-263 and His-265 each coordinate Zn(2+). The segment at 276–310 (IEMDVASENGQRALKENPDRAKVTQNRWGRSVVQL) is flexible loop. Residues Cys-318, Cys-334, Cys-376, Cys-378, Cys-430, and Cys-447 each contribute to the Zn(2+) site. Residues 495–512 (VSLPAGHAETSRQNPFDF) are C-terminal arm, DBP binding.

The protein belongs to the adenoviridae E2A DNA-binding protein family. As to quaternary structure, homomultimerizes on viral ssDNA bound to pTP. Forms a initiation complex with viral polymerase, pTP and hosts NFIA and POU2F1/OCT1. Interacts with host SRCAP.

It is found in the host nucleus. Plays a role in the elongation phase of viral strand displacement replication by unwinding the template in an ATP-independent fashion, employing its capacity to form multimers. Also enhances the rate of initiation. Released from template upon second strand synthesis. Assembles in complex with viral pTP, viral pol, host NFIA and host POU2F1/OCT1 on viral origin of replication. Covers the whole ssDNA genome during synthesis. The complementary strand synthesis induces its relese from DNA template. May inhibit cellular transcription mediated by the interaction between host SRCAP and CBP. The sequence is that of DNA-binding protein from Homo sapiens (Human).